A 462-amino-acid chain; its full sequence is Na(+)/H(+) antiporter NhaA 2 (462 aa).

The tract at residues 1–31 (MKSSTREQTPVTSPTPHDPTPPTPPRGSTPL) is disordered. Over residues 16–27 (PHDPTPPTPPRG) the composition is skewed to pro residues. A run of 11 helical transmembrane segments spans residues 52–72 (IGGA…NSPW), 96–116 (LTLG…IAGL), 134–154 (LVPV…YVLV), 165–185 (GWAI…AVIS), 195–215 (FLLT…AIFY), 218–238 (TLAV…GLLV), 244–264 (SWWL…ASGI), 309–329 (FAVP…LSGL), 337–357 (VALG…LGAT), 382–402 (LLGG…FGAG), and 408–428 (HVKV…AVVL).

This sequence belongs to the NhaA Na(+)/H(+) (TC 2.A.33) antiporter family.

The protein localises to the cell membrane. The catalysed reaction is Na(+)(in) + 2 H(+)(out) = Na(+)(out) + 2 H(+)(in). Its function is as follows. Na(+)/H(+) antiporter that extrudes sodium in exchange for external protons. This chain is Na(+)/H(+) antiporter NhaA 2, found in Kineococcus radiotolerans (strain ATCC BAA-149 / DSM 14245 / SRS30216).